The chain runs to 898 residues: Filament-like plant protein 7 (898 aa).

2 coiled-coil regions span residues 23–224 (EVVA…TAEA) and 287–320 (EKIN…LQFS). Disordered stretches follow at residues 429–482 (DNRP…DIKS), 693–723 (PGNQ…KLEE), and 777–835 (KSNN…GGNS). Low complexity predominate over residues 434–459 (SSPICSSDSISATGPVENESNENSSE). The span at 460 to 469 (ATKTSGTVYS) shows a compositional bias: polar residues. Residues 703–764 (VEEEANDKTA…KALTNSKETA (62 aa)) are a coiled coil. Basic and acidic residues predominate over residues 808-822 (MKAEDHNTGESKDQK).

This sequence belongs to the FPP family. Interacts with WPP/MAF proteins.

This chain is Filament-like plant protein 7 (FPP7), found in Arabidopsis thaliana (Mouse-ear cress).